The following is a 42-amino-acid chain: Photosystem I reaction center subunit IX (42 aa).

The helical transmembrane segment at 7–27 (YLSTAPVLATLWFGFLAGLLI) threads the bilayer.

This sequence belongs to the PsaJ family.

Its subcellular location is the plastid. It localises to the chloroplast thylakoid membrane. Its function is as follows. May help in the organization of the PsaE and PsaF subunits. The polypeptide is Photosystem I reaction center subunit IX (Marchantia polymorpha (Common liverwort)).